A 324-amino-acid chain; its full sequence is Formimidoylglutamase (324 aa).

6 residues coordinate Mn(2+): His-124, Asp-153, His-155, Asp-157, Asp-245, and Asp-247.

Belongs to the arginase family. Mn(2+) serves as cofactor.

It carries out the reaction N-formimidoyl-L-glutamate + H2O = formamide + L-glutamate. Its pathway is amino-acid degradation; L-histidine degradation into L-glutamate; L-glutamate from N-formimidoyl-L-glutamate (hydrolase route): step 1/1. Catalyzes the conversion of N-formimidoyl-L-glutamate to L-glutamate and formamide. The chain is Formimidoylglutamase from Hahella chejuensis (strain KCTC 2396).